Here is a 406-residue protein sequence, read N- to C-terminus: Probable transcription factor FPSE_09188 (406 aa).

The disordered stretch occupies residues 1–72 (MELPTYAVSQ…PKGSSSRCNG (72 aa)). Low complexity predominate over residues 7 to 20 (AVSQSLLASRSVSS).

This sequence belongs to the bZIP family.

The protein localises to the nucleus. The two putative transcription factors FPSE_09188 and FPSE_09189 could be responsible for orchestrating expression of the W493 A and B biosynthesis cluster genes. W493 A and B consist of six amino acid residues D-allo-thr, L-Ala, D-Ala, L-Gln, D-Tyr, and L-Val/L-Ile linked to a 3-hydroxy-4-methyltetradecanoic acid polyketide chain. The polypeptide is Probable transcription factor FPSE_09188 (Fusarium pseudograminearum (strain CS3096) (Wheat and barley crown-rot fungus)).